A 328-amino-acid chain; its full sequence is tRNA uridine(34) hydroxylase (328 aa).

Residues 130-224 (LDEDTVVLDT…YGKDPEVQGE (95 aa)) enclose the Rhodanese domain. Catalysis depends on cysteine 184, which acts as the Cysteine persulfide intermediate.

The protein belongs to the TrhO family.

It catalyses the reaction uridine(34) in tRNA + AH2 + O2 = 5-hydroxyuridine(34) in tRNA + A + H2O. In terms of biological role, catalyzes oxygen-dependent 5-hydroxyuridine (ho5U) modification at position 34 in tRNAs. This chain is tRNA uridine(34) hydroxylase, found in Streptococcus agalactiae serotype Ia (strain ATCC 27591 / A909 / CDC SS700).